Reading from the N-terminus, the 84-residue chain is Large ribosomal subunit protein bL31B-2 (84 aa).

It belongs to the bacterial ribosomal protein bL31 family. Type B subfamily. As to quaternary structure, part of the 50S ribosomal subunit.

The chain is Large ribosomal subunit protein bL31B-2 from Streptomyces coelicolor (strain ATCC BAA-471 / A3(2) / M145).